The primary structure comprises 410 residues: Elongation factor Tu, apicoplast (410 aa).

One can recognise a tr-type G domain in the interval 10 to 214 (KQHINLGTIG…QIIDNIIIPT (205 aa)). Residues 19–26 (GHVDHGKT) are G1. Residue 19 to 26 (GHVDHGKT) participates in GTP binding. Mg(2+) is bound at residue T26. A G2 region spans residues 60-64 (GITIN). The G3 stretch occupies residues 81–84 (DCPG). Residues 81 to 85 (DCPGH) and 136 to 139 (NKED) contribute to the GTP site. Residues 136 to 139 (NKED) are G4. The tract at residues 174–176 (SAL) is G5.

It belongs to the TRAFAC class translation factor GTPase superfamily. Classic translation factor GTPase family. EF-Tu/EF-1A subfamily.

Its subcellular location is the plastid. The protein localises to the apicoplast. The catalysed reaction is GTP + H2O = GDP + phosphate + H(+). Its function is as follows. GTP hydrolase that promotes the GTP-dependent binding of aminoacyl-tRNA to the A-site of ribosomes during protein biosynthesis. This Plasmodium falciparum (isolate 3D7) protein is Elongation factor Tu, apicoplast (tufA).